An 82-amino-acid chain; its full sequence is RNA-binding protein Hfq (82 aa).

Positions 9–68 (DPYLNTLRKERVPVSIYLVNGIKLQGQIESFDQFVILLKNTVSQMVYKTAISTVVPSRPV) constitute a Sm domain.

The protein belongs to the Hfq family. Homohexamer.

In terms of biological role, RNA chaperone that binds small regulatory RNA (sRNAs) and mRNAs to facilitate mRNA translational regulation in response to envelope stress, environmental stress and changes in metabolite concentrations. Also binds with high specificity to tRNAs. The polypeptide is RNA-binding protein Hfq (Pseudomonas aeruginosa).